The following is a 71-amino-acid chain: Exodeoxyribonuclease 7 small subunit (71 aa).

It belongs to the XseB family. In terms of assembly, heterooligomer composed of large and small subunits.

It localises to the cytoplasm. It catalyses the reaction Exonucleolytic cleavage in either 5'- to 3'- or 3'- to 5'-direction to yield nucleoside 5'-phosphates.. Its function is as follows. Bidirectionally degrades single-stranded DNA into large acid-insoluble oligonucleotides, which are then degraded further into small acid-soluble oligonucleotides. The sequence is that of Exodeoxyribonuclease 7 small subunit from Streptococcus agalactiae serotype Ia (strain ATCC 27591 / A909 / CDC SS700).